The following is a 376-amino-acid chain: Chorismate synthase (376 aa).

Arginine 39 and arginine 45 together coordinate NADP(+). FMN is bound by residues 115 to 117, glycine 276, 291 to 295, and arginine 317; these read RSS and KPIPT.

It belongs to the chorismate synthase family. In terms of assembly, homotetramer. It depends on FMNH2 as a cofactor.

The enzyme catalyses 5-O-(1-carboxyvinyl)-3-phosphoshikimate = chorismate + phosphate. The protein operates within metabolic intermediate biosynthesis; chorismate biosynthesis; chorismate from D-erythrose 4-phosphate and phosphoenolpyruvate: step 7/7. Catalyzes the anti-1,4-elimination of the C-3 phosphate and the C-6 proR hydrogen from 5-enolpyruvylshikimate-3-phosphate (EPSP) to yield chorismate, which is the branch point compound that serves as the starting substrate for the three terminal pathways of aromatic amino acid biosynthesis. This reaction introduces a second double bond into the aromatic ring system. This chain is Chorismate synthase, found in Thermotoga sp. (strain RQ2).